Reading from the N-terminus, the 289-residue chain is Phosphoribulokinase (289 aa).

Position 12–20 (12–20) interacts with ATP; the sequence is GSSGAGTTT.

Belongs to the phosphoribulokinase family.

The catalysed reaction is D-ribulose 5-phosphate + ATP = D-ribulose 1,5-bisphosphate + ADP + H(+). It functions in the pathway carbohydrate biosynthesis; Calvin cycle. This chain is Phosphoribulokinase (cbbP), found in Rhizobium meliloti (strain 1021) (Ensifer meliloti).